The sequence spans 1367 residues: MAP3K epsilon protein kinase 2 (1367 aa).

The region spanning 20-274 (YMLGDEIGKG…AKTLLSHPWI (255 aa)) is the Protein kinase domain. HEAT repeat units lie at residues 25 to 62 (EIGKGAYGRVYIGLDLENGDFVAIKQVSLENIGQEDLN) and 86 to 125 (LKTKTHLHIILEYVENGSLANIIKPNKFGPFPESLVTVYI). ATP is bound by residues 26-34 (IGKGAYGRV) and lysine 49. The active-site Proton acceptor is aspartate 144. The stretch at 218–256 (PYYDLQPMPALYRIVQDDTPPIPDSLSPDITDFLRLCFK) is one HEAT 3 repeat. Disordered stretches follow at residues 285-422 (LRHS…GRRN) and 437-513 (SSHS…VADG). Over residues 293-306 (YMKETDSSSEKDAE) the composition is skewed to basic and acidic residues. Positions 351–363 (LGEEGTDSEDDIN) are enriched in acidic residues. Polar residues predominate over residues 378-396 (RQSGTCSISSDAKGTSQDV). 2 stretches are compositionally biased toward basic and acidic residues: residues 397–408 (LENHEKYDRDEI) and 475–491 (SLHDLFHPLDKVPEGKT). The segment covering 492 to 507 (NEASTSTPTANVNQGD) has biased composition (polar residues). 5 HEAT repeats span residues 538-576 (SQDGGDLFRLMMGVLKDDVLNIDDLVFDEKVPPENLFPL), 577-614 (QAVEFSRLVSSLRPDESEDAIVTSSLKLVAMFRQRPGQ), 633-658 (IPKSRVICAVLQLINEIVKDNTDFLE), 659-700 (NACL…SSPL), and 704-742 (MFISCRGIPVLVGFLEADYAKHREMVHLAIDGMWQVFKL). Positions 792–860 (PRARSGQLDP…LHPDGDRPRL (69 aa)) are disordered. Polar residues-rich tracts occupy residues 799–814 (LDPNNPIFSQRETSPS) and 835–845 (ALTSNSQSSDV). Positions 846 to 859 (HQPDALHPDGDRPR) are enriched in basic and acidic residues. HEAT repeat units follow at residues 850–888 (ALHPDGDRPRLSSVVADATEDVIQQHRISLSANRTSTDK), 906–943 (DQVRPLLSLLEKEPPSRKISGQLDYVKHIAGIERHESR), 1045–1066 (DYLEKVADLLLEFARAETTVKS), 1067–1105 (YMCSQSLLSRLFQMFNRVEPPILLKILECTNHLSTDPNC), 1112–1150 (ADAIKQLIPNLELKEGPLVYQIHHEVLSALFNLCKINKR), 1154–1191 (QAAENGIIPHLMLFVMSDSPLKQYALPLLCDMAHASRN), 1196–1236 (LRAH…KVEQ), 1257–1280 (RHFVHILEPFLKIITKSSSINKTL), 1281–1317 (ALNGLTPLLIARLDHQDAIARLNLLKLIKAVYEKHPK), and 1347–1367 (QVLVKQMATSLLKALHINTIL).

This sequence belongs to the protein kinase superfamily. Ser/Thr protein kinase family. In terms of processing, autophosphorylated. In terms of tissue distribution, expressed in both the sporophytic and the gametophytic tissues, especially in dividing cells. Mostly present in flower buds and mature flowers. Also accumulates in embryos and in roots.

The protein localises to the cytoplasm. Its subcellular location is the cytoskeleton. It is found in the microtubule organizing center. It localises to the nucleus. The protein resides in the nucleolus. The protein localises to the cell membrane. The enzyme catalyses L-seryl-[protein] + ATP = O-phospho-L-seryl-[protein] + ADP + H(+). It carries out the reaction L-threonyl-[protein] + ATP = O-phospho-L-threonyl-[protein] + ADP + H(+). Functionally, serine/threonine-protein kinase involved in the spatial and temporal control system organizing cortical activities in mitotic and postmitotic cells. Required for the normal functioning of the plasma membrane in developing pollen. Involved in the regulation of cell expansion and embryo development. This Arabidopsis thaliana (Mouse-ear cress) protein is MAP3K epsilon protein kinase 2.